We begin with the raw amino-acid sequence, 626 residues long: DNA polymerase 2 (626 aa).

This sequence belongs to the DNA polymerase type-B family.

It catalyses the reaction DNA(n) + a 2'-deoxyribonucleoside 5'-triphosphate = DNA(n+1) + diphosphate. In terms of biological role, this polymerase is devoid of exonuclease activity. The polypeptide is DNA polymerase 2 (dpo2) (Saccharolobus solfataricus (strain ATCC 35092 / DSM 1617 / JCM 11322 / P2) (Sulfolobus solfataricus)).